Consider the following 648-residue polypeptide: DNA ligase (648 aa).

NAD(+)-binding positions include 30–34 (DEEYD) and 79–80 (SQ). Lys-110 (N6-AMP-lysine intermediate) is an active-site residue. Arg-131, Glu-165, Lys-280, and Lys-304 together coordinate NAD(+). Zn(2+) is bound by residues Cys-398, Cys-401, Cys-414, and Cys-419. One can recognise a BRCT domain in the interval 573-648 (VSENPFKNKT…LTEEEMNSLF (76 aa)).

The protein belongs to the NAD-dependent DNA ligase family. LigA subfamily. Mg(2+) is required as a cofactor. It depends on Mn(2+) as a cofactor.

It carries out the reaction NAD(+) + (deoxyribonucleotide)n-3'-hydroxyl + 5'-phospho-(deoxyribonucleotide)m = (deoxyribonucleotide)n+m + AMP + beta-nicotinamide D-nucleotide.. In terms of biological role, DNA ligase that catalyzes the formation of phosphodiester linkages between 5'-phosphoryl and 3'-hydroxyl groups in double-stranded DNA using NAD as a coenzyme and as the energy source for the reaction. It is essential for DNA replication and repair of damaged DNA. This Aliarcobacter butzleri (strain RM4018) (Arcobacter butzleri) protein is DNA ligase.